The following is a 327-amino-acid chain: GMP reductase (327 aa).

The Thioimidate intermediate role is filled by Cys-176. 205-228 contacts NADP(+); that stretch reads IIADGGIRTHGDIAKSIRFGATMV.

This sequence belongs to the IMPDH/GMPR family. GuaC type 2 subfamily.

It carries out the reaction IMP + NH4(+) + NADP(+) = GMP + NADPH + 2 H(+). Functionally, catalyzes the irreversible NADPH-dependent deamination of GMP to IMP. It functions in the conversion of nucleobase, nucleoside and nucleotide derivatives of G to A nucleotides, and in maintaining the intracellular balance of A and G nucleotides. The chain is GMP reductase from Streptococcus equi subsp. equi (strain 4047).